The primary structure comprises 72 residues: Translation initiation factor IF-1 (72 aa).

The S1-like domain occupies 1-72 (MSKQTAIEQD…TKGRISFRYK (72 aa)).

The protein belongs to the IF-1 family. In terms of assembly, component of the 30S ribosomal translation pre-initiation complex which assembles on the 30S ribosome in the order IF-2 and IF-3, IF-1 and N-formylmethionyl-tRNA(fMet); mRNA recruitment can occur at any time during PIC assembly.

It localises to the cytoplasm. In terms of biological role, one of the essential components for the initiation of protein synthesis. Stabilizes the binding of IF-2 and IF-3 on the 30S subunit to which N-formylmethionyl-tRNA(fMet) subsequently binds. Helps modulate mRNA selection, yielding the 30S pre-initiation complex (PIC). Upon addition of the 50S ribosomal subunit IF-1, IF-2 and IF-3 are released leaving the mature 70S translation initiation complex. This chain is Translation initiation factor IF-1, found in Porphyromonas gingivalis (strain ATCC BAA-308 / W83).